The sequence spans 418 residues: Serine hydroxymethyltransferase (418 aa).

(6S)-5,6,7,8-tetrahydrofolate is bound by residues Leu121 and 125–127 (GHL). At Lys230 the chain carries N6-(pyridoxal phosphate)lysine. 356 to 358 (SPF) contacts (6S)-5,6,7,8-tetrahydrofolate.

It belongs to the SHMT family. In terms of assembly, homodimer. It depends on pyridoxal 5'-phosphate as a cofactor.

Its subcellular location is the cytoplasm. It catalyses the reaction (6R)-5,10-methylene-5,6,7,8-tetrahydrofolate + glycine + H2O = (6S)-5,6,7,8-tetrahydrofolate + L-serine. It participates in one-carbon metabolism; tetrahydrofolate interconversion. It functions in the pathway amino-acid biosynthesis; glycine biosynthesis; glycine from L-serine: step 1/1. Catalyzes the reversible interconversion of serine and glycine with tetrahydrofolate (THF) serving as the one-carbon carrier. This reaction serves as the major source of one-carbon groups required for the biosynthesis of purines, thymidylate, methionine, and other important biomolecules. Also exhibits THF-independent aldolase activity toward beta-hydroxyamino acids, producing glycine and aldehydes, via a retro-aldol mechanism. The polypeptide is Serine hydroxymethyltransferase (Alteromonas mediterranea (strain DSM 17117 / CIP 110805 / LMG 28347 / Deep ecotype)).